The primary structure comprises 465 residues: Soluble pyridine nucleotide transhydrogenase (465 aa).

36 to 45 (ERYNNVGGGC) is an FAD binding site.

It belongs to the class-I pyridine nucleotide-disulfide oxidoreductase family. It depends on FAD as a cofactor.

The protein resides in the cytoplasm. It carries out the reaction NAD(+) + NADPH = NADH + NADP(+). In terms of biological role, conversion of NADPH, generated by peripheral catabolic pathways, to NADH, which can enter the respiratory chain for energy generation. The sequence is that of Soluble pyridine nucleotide transhydrogenase from Serratia proteamaculans (strain 568).